Here is a 604-residue protein sequence, read N- to C-terminus: Prostaglandin G/H synthase 2 (604 aa).

An N-terminal signal peptide occupies residues 1 to 17 (MLARAGLLCASLSPPHA). The 38-residue stretch at 18 to 55 (ANPCCSNPCQNQGVCMSIGFDQYMCDCSRTGFYGENCS) folds into the EGF-like domain. Intrachain disulfides connect Cys-21-Cys-32, Cys-22-Cys-145, Cys-26-Cys-42, and Cys-44-Cys-54. N-linked (GlcNAc...) asparagine glycosylation is present at Asn-53. Arg-106 serves as a coordination point for substrate. The N-linked (GlcNAc...) asparagine glycan is linked to Asn-130. His-193 acts as the Proton acceptor in catalysis. Tyr-341 contributes to the substrate binding site. Tyr-371 functions as the For cyclooxygenase activity in the catalytic mechanism. A heme b-binding site is contributed by His-374. A glycan (N-linked (GlcNAc...) asparagine) is linked at Asn-396. Residue Cys-526 is modified to S-nitrosocysteine. A disulfide bridge links Cys-555 with Cys-561. The N-linked (GlcNAc...) asparagine glycan is linked to Asn-580.

The protein belongs to the prostaglandin G/H synthase family. As to quaternary structure, homodimer. Heme b serves as cofactor. Post-translationally, S-nitrosylation by NOS2 (iNOS) activates enzyme activity. S-nitrosylation may take place on different Cys residues in addition to Cys-526.

It is found in the microsome membrane. The protein resides in the endoplasmic reticulum membrane. It localises to the nucleus inner membrane. The protein localises to the nucleus outer membrane. It carries out the reaction (5Z,8Z,11Z,14Z)-eicosatetraenoate + AH2 + 2 O2 = prostaglandin H2 + A + H2O. It catalyses the reaction (5Z,8Z,11Z,14Z)-eicosatetraenoate + 2 O2 = prostaglandin G2. The catalysed reaction is prostaglandin G2 + AH2 = prostaglandin H2 + A + H2O. The enzyme catalyses (5Z,8Z,11Z,14Z,17Z)-eicosapentaenoate + 2 O2 = prostaglandin G3. It carries out the reaction prostaglandin G3 + AH2 = prostaglandin H3 + A + H2O. It catalyses the reaction (8Z,11Z,14Z)-eicosatrienoate + 2 O2 = prostaglandin G1. The catalysed reaction is prostaglandin G1 + AH2 = prostaglandin H1 + A + H2O. The enzyme catalyses 2-(5Z,8Z,11Z,14Z)-eicosatetraenoyl-sn-glycero-3-phosphoethanolamine + 2 O2 = 2-(prostaglandin G2)-sn-glycero-3-phosphoethanolamine. It carries out the reaction 2-(prostaglandin G2)-sn-glycero-3-phosphoethanolamine + AH2 = 2-(prostaglandin H2)-sn-glycero-3-phosphoethanolamine + A + H2O. It catalyses the reaction 2-(5Z,8Z,11Z,14Z)-eicosatetraenoyl-sn-glycero-3-phosphocholine + 2 O2 = 2-(prostaglandin G2)-sn-glycero-3-phosphocholine. The catalysed reaction is 2-(prostaglandin G2)-sn-glycero-3-phosphocholine + AH2 = 2-(prostaglandin H2)-sn-glycero-3-phosphocholine + A + H2O. The enzyme catalyses (15S)-hydroperoxy-(5Z,8Z,11Z,13E)-eicosatetraenoate + AH2 = (15S)-hydroxy-(5Z,8Z,11Z,13E)-eicosatetraenoate + A + H2O. It carries out the reaction 2-(5Z,8Z,11Z,14Z)-eicosatetraenoyl-sn-glycero-3-phosphocholine + AH2 + O2 = 2-[(15S)-hydroxy-(5Z,8Z,11Z,13E)-eicosatetraenoyl]-sn-glycero-3-phosphocholine + A + H2O. It catalyses the reaction 2-(5Z,8Z,11Z,14Z)-eicosatetraenoyl-sn-glycero-3-phosphocholine + AH2 + O2 = 2-[(15R)-hydroxy-(5Z,8Z,11Z,13E)-eicosatetraenoyl]-sn-glycero-3-phosphocholine + A + H2O. The catalysed reaction is 2-(5Z,8Z,11Z,14Z)-eicosatetraenoyl-sn-glycero-3-phosphocholine + AH2 + O2 = 2-[(11R)-hydroxy-(5Z,8Z,12E,14Z)-eicosatetraenoyl]-sn-glycero-3-phosphocholine + A + H2O. The enzyme catalyses (9Z,12Z)-octadecadienoate + AH2 + O2 = 9-hydroxy-(10E,12Z)-octadecadienoate + A + H2O. It carries out the reaction (9Z,12Z)-octadecadienoate + AH2 + O2 = 13-hydroxy-(9Z,11E)-octadecadienoate + A + H2O. It catalyses the reaction (5Z,8Z,11Z,14Z)-eicosatetraenoate + AH2 + O2 = (15R)-hydroxy-(5Z,8Z,11Z,13E)-eicosatetraenoate + A + H2O. The catalysed reaction is (5Z,8Z,11Z,14Z)-eicosatetraenoate + AH2 + O2 = (11R)-hydroxy-(5Z,8Z,12E,14Z)-eicosatetraenoate + A + H2O. The enzyme catalyses (5Z,8Z,11Z,14Z,17Z)-eicosapentaenoate + AH2 + O2 = (11R)-hydroxy-(5Z,8Z,12E,14Z,17Z)-eicosapentaenoate + A + H2O. It carries out the reaction (5Z,8Z,11Z,14Z,17Z)-eicosapentaenoate + AH2 + O2 = (18S)-hydroxy-(5Z,8Z,11Z,14Z,16E)-eicosapentaenoate + A + H2O. It catalyses the reaction (5Z,8Z,11Z,14Z,17Z)-eicosapentaenoate + AH2 + O2 = (18R)-hydroxy-(5Z,8Z,11Z,14Z,16E)-eicosapentaenoate + A + H2O. The catalysed reaction is (5Z,8Z,11Z,14Z,17Z)-eicosapentaenoate + AH2 + O2 = (15R)-hydroxy-(5Z,8Z,11Z,13E,17Z)-eicosapentaenoate + A + H2O. The enzyme catalyses (5Z,8Z,11Z,14Z,17Z)-eicosapentaenoate + AH2 + O2 = (15S)-hydroxy-(5Z,8Z,11Z,13E,17Z)-eicosapentaenoate + A + H2O. It carries out the reaction (7Z,10Z,13Z,16Z,19Z)-docosapentaenoate + AH2 + O2 = 13R-hydroxy-(7Z,10Z,14E,16Z,19Z)-docosapentaenoate + A + H2O. It catalyses the reaction (4Z,7Z,10Z,13Z,16Z,19Z)-docosahexaenoate + AH2 + O2 = 13-hydroxy-(4Z,7Z,10Z,14E,16Z,19Z)-docosahexaenoate + A + H2O. The catalysed reaction is (5S)-hydroxy-(6E,8Z,11Z,14Z)-eicosatetraenoate + AH2 + O2 = (5S,15R)-dihydroxy-(6E,8Z,11Z,13E)-eicosatetraenoate + A + H2O. The enzyme catalyses (4Z,7Z,10Z,13Z,16Z,19Z)-docosahexaenoate + AH2 + O2 = 17R-hydroxy-(4Z,7Z,10Z,13Z,15E,19Z)-docosahexaenoate + A + H2O. It carries out the reaction (5S)-hydroxy-(6E,8Z,11Z,14Z)-eicosatetraenoate + AH2 + O2 = (5S,15S)-dihydroxy-(6E,8Z,11Z,13E)-eicosatetraenoate + A + H2O. It catalyses the reaction (5S)-hydroxy-(6E,8Z,11Z,14Z)-eicosatetraenoate + AH2 + O2 = (5S,11R)-dihydroxy-(6E,8Z,12E,14Z)-eicosatetraenoate + A + H2O. The catalysed reaction is 2-(5Z,8Z,11Z,14Z-eicosatetraenoyl)-glycerol + 2 O2 = 2-glyceryl-prostaglandin G2. The enzyme catalyses 2-glyceryl-prostaglandin G2 + AH2 = 2-glyceryl-prostaglandin H2 + A + H2O. It carries out the reaction (5Z,8Z,11Z,14Z)-eicosatetraenoate + O2 = (15R)-hydroperoxy-(5Z,8Z,11Z,13E)-eicosatetraenoate. It catalyses the reaction (5Z,8Z,11Z,14Z)-eicosatetraenoate + O2 = 11R-hydroperoxy-(5Z,8Z,12E,14Z)-eicosatetraenoate. The catalysed reaction is (9Z,12Z)-octadecadienoate + AH2 + O2 = (9R)-hydroxy-(10E,12Z)-octadecadienoate + A + H2O. The enzyme catalyses (9Z,12Z)-octadecadienoate + AH2 + O2 = (9S)-hydroxy-(10E,12Z)-octadecadienoate + A + H2O. It carries out the reaction (9Z,12Z)-octadecadienoate + AH2 + O2 = (13S)-hydroxy-(9Z,11E)-octadecadienoate + A + H2O. It catalyses the reaction (9Z,12Z)-octadecadienoate + AH2 + O2 = (13R)-hydroxy-(9Z,11E)-octadecadienoate + A + H2O. It functions in the pathway lipid metabolism; prostaglandin biosynthesis. Functionally, dual cyclooxygenase and peroxidase in the biosynthesis pathway of prostanoids, a class of C20 oxylipins mainly derived from arachidonate ((5Z,8Z,11Z,14Z)-eicosatetraenoate, AA, C20:4(n-6)), with a particular role in the inflammatory response. The cyclooxygenase activity oxygenates AA to the hydroperoxy endoperoxide prostaglandin G2 (PGG2), and the peroxidase activity reduces PGG2 to the hydroxy endoperoxide prostaglandin H2 (PGH2), the precursor of all 2-series prostaglandins and thromboxanes. This complex transformation is initiated by abstraction of hydrogen at carbon 13 (with S-stereochemistry), followed by insertion of molecular O2 to form the endoperoxide bridge between carbon 9 and 11 that defines prostaglandins. The insertion of a second molecule of O2 (bis-oxygenase activity) yields a hydroperoxy group in PGG2 that is then reduced to PGH2 by two electrons. Similarly catalyzes successive cyclooxygenation and peroxidation of dihomo-gamma-linoleate (DGLA, C20:3(n-6)) and eicosapentaenoate (EPA, C20:5(n-3)) to corresponding PGH1 and PGH3, the precursors of 1- and 3-series prostaglandins. In an alternative pathway of prostanoid biosynthesis, converts 2-arachidonoyl lysophopholipids to prostanoid lysophopholipids, which are then hydrolyzed by intracellular phospholipases to release free prostanoids. Metabolizes 2-arachidonoyl glycerol yielding the glyceryl ester of PGH2, a process that can contribute to pain response. Generates lipid mediators from n-3 and n-6 polyunsaturated fatty acids (PUFAs) via a lipoxygenase-type mechanism. Oxygenates PUFAs to hydroperoxy compounds and then reduces them to corresponding alcohols. Plays a role in the generation of resolution phase interaction products (resolvins) during both sterile and infectious inflammation. Metabolizes docosahexaenoate (DHA, C22:6(n-3)) to 17R-HDHA, a precursor of the D-series resolvins (RvDs). As a component of the biosynthetic pathway of E-series resolvins (RvEs), converts eicosapentaenoate (EPA, C20:5(n-3)) primarily to 18S-HEPE that is further metabolized by ALOX5 and LTA4H to generate 18S-RvE1 and 18S-RvE2. In vascular endothelial cells, converts docosapentaenoate (DPA, C22:5(n-3)) to 13R-HDPA, a precursor for 13-series resolvins (RvTs) shown to activate macrophage phagocytosis during bacterial infection. In activated leukocytes, contributes to oxygenation of hydroxyeicosatetraenoates (HETE) to diHETES (5,15-diHETE and 5,11-diHETE). Can also use linoleate (LA, (9Z,12Z)-octadecadienoate, C18:2(n-6)) as substrate and produce hydroxyoctadecadienoates (HODEs) in a regio- and stereospecific manner, being (9R)-HODE ((9R)-hydroxy-(10E,12Z)-octadecadienoate) and (13S)-HODE ((13S)-hydroxy-(9Z,11E)-octadecadienoate) its major products. During neuroinflammation, plays a role in neuronal secretion of specialized preresolving mediators (SPMs) 15R-lipoxin A4 that regulates phagocytic microglia. This chain is Prostaglandin G/H synthase 2 (PTGS2), found in Neovison vison (American mink).